The sequence spans 434 residues: 3-phosphoshikimate 1-carboxyvinyltransferase (434 aa).

3 residues coordinate 3-phosphoshikimate: lysine 22, serine 23, and arginine 27. Phosphoenolpyruvate is bound at residue lysine 22. Glycine 93 and arginine 121 together coordinate phosphoenolpyruvate. 3-phosphoshikimate contacts are provided by serine 168, serine 169, glutamine 170, serine 199, aspartate 320, and lysine 347. Residue glutamine 170 participates in phosphoenolpyruvate binding. Residue aspartate 320 is the Proton acceptor of the active site. Residues arginine 351, arginine 394, and lysine 419 each coordinate phosphoenolpyruvate.

It belongs to the EPSP synthase family. In terms of assembly, monomer.

The protein resides in the cytoplasm. It carries out the reaction 3-phosphoshikimate + phosphoenolpyruvate = 5-O-(1-carboxyvinyl)-3-phosphoshikimate + phosphate. It functions in the pathway metabolic intermediate biosynthesis; chorismate biosynthesis; chorismate from D-erythrose 4-phosphate and phosphoenolpyruvate: step 6/7. Its function is as follows. Catalyzes the transfer of the enolpyruvyl moiety of phosphoenolpyruvate (PEP) to the 5-hydroxyl of shikimate-3-phosphate (S3P) to produce enolpyruvyl shikimate-3-phosphate and inorganic phosphate. This chain is 3-phosphoshikimate 1-carboxyvinyltransferase, found in Burkholderia vietnamiensis (strain G4 / LMG 22486) (Burkholderia cepacia (strain R1808)).